The chain runs to 1064 residues: Error-prone DNA polymerase (1064 aa).

It belongs to the DNA polymerase type-C family. DnaE2 subfamily.

It is found in the cytoplasm. The catalysed reaction is DNA(n) + a 2'-deoxyribonucleoside 5'-triphosphate = DNA(n+1) + diphosphate. DNA polymerase involved in damage-induced mutagenesis and translesion synthesis (TLS). It is not the major replicative DNA polymerase. This Azoarcus sp. (strain BH72) protein is Error-prone DNA polymerase.